The chain runs to 409 residues: Probable peptidoglycan glycosyltransferase FtsW (409 aa).

9 helical membrane-spanning segments follow: residues 42–62 (LFTL…SASL), 72–92 (PFHF…VMLA), 108–128 (LLLL…EVNG), 135–155 (VGPI…IYMA), 178–198 (LLFI…VVVL), 213–233 (LWQF…LIIV), 303–323 (FLGV…ALII), 337–357 (YLAY…IGVA), and 368–388 (LPLV…VGLL).

The protein belongs to the SEDS family. FtsW subfamily.

The protein resides in the cell inner membrane. The enzyme catalyses [GlcNAc-(1-&gt;4)-Mur2Ac(oyl-L-Ala-gamma-D-Glu-L-Lys-D-Ala-D-Ala)](n)-di-trans,octa-cis-undecaprenyl diphosphate + beta-D-GlcNAc-(1-&gt;4)-Mur2Ac(oyl-L-Ala-gamma-D-Glu-L-Lys-D-Ala-D-Ala)-di-trans,octa-cis-undecaprenyl diphosphate = [GlcNAc-(1-&gt;4)-Mur2Ac(oyl-L-Ala-gamma-D-Glu-L-Lys-D-Ala-D-Ala)](n+1)-di-trans,octa-cis-undecaprenyl diphosphate + di-trans,octa-cis-undecaprenyl diphosphate + H(+). Its pathway is cell wall biogenesis; peptidoglycan biosynthesis. Its function is as follows. Peptidoglycan polymerase that is essential for cell division. In Idiomarina loihiensis (strain ATCC BAA-735 / DSM 15497 / L2-TR), this protein is Probable peptidoglycan glycosyltransferase FtsW.